Here is a 376-residue protein sequence, read N- to C-terminus: Cellular tumor antigen p53 (376 aa).

The interval 1-36 (MEGNGERDTMMVEPPDSQEFAELWLRNLIVRDNSLW) is transcription activation (acidic). The DNA-binding element occupies 77–268 (DYPGLLNFTL…KTEESNFKKQ (192 aa)). Positions 150-159 (RCPHHERSND) are enriched in basic and acidic residues. The tract at residues 150 to 171 (RCPHHERSNDSSDGPAPPGHLL) is disordered. Zn(2+) contacts are provided by Cys-151, His-154, Cys-214, and Cys-218. The tract at residues 249–256 (RVCACPGR) is interaction with DNA. Composition is skewed to basic and acidic residues over residues 257–270 (DRKT…KQQE) and 282–294 (SMKD…EASK). The segment at 257 to 306 (DRKTEESNFKKQQEPKTSGKTLTKRSMKDPPSHPEASKKSKNSSSDDEIY) is disordered. The short motif at 280-297 (KRSMKDPPSHPEASKKSK) is the Bipartite nuclear localization signal element. Residues 303 to 334 (DEIYTLQVRGKERYEFLKKINDGLELSDVVPP) are oligomerization. Positions 317–328 (EFLKKINDGLEL) match the Nuclear export signal motif. The tract at residues 342-376 (QKLLSKTCRKERDGAAGEPKRGKKRLVKEEKCDSD) is disordered. Positions 347-372 (KTCRKERDGAAGEPKRGKKRLVKEEK) are basic (repression of DNA-binding). Positions 349–361 (CRKERDGAAGEPK) are enriched in basic and acidic residues.

The protein belongs to the p53 family. Binds DNA as a homotetramer. Zn(2+) is required as a cofactor.

It is found in the cytoplasm. It localises to the nucleus. Its function is as follows. Multifunctional transcription factor that induces cell cycle arrest, DNA repair or apoptosis upon binding to its target DNA sequence. Acts as a tumor suppressor in many tumor types; induces growth arrest or apoptosis depending on the physiological circumstances and cell type. Negatively regulates cell division by controlling expression of a set of genes required for this process. One of the activated genes is an inhibitor of cyclin-dependent kinases. Apoptosis induction seems to be mediated either by stimulation of BAX and FAS antigen expression, or by repression of Bcl-2 expression. The chain is Cellular tumor antigen p53 (tp53) from Ictalurus punctatus (Channel catfish).